Reading from the N-terminus, the 130-residue chain is MKFRKGRPKIPRLISEEPQFKLFKPAGTPGTELESEVLTFEELESLRLVDYLNQPHEEAADAMGISRRVFWNILKSARKKVADALINGKMIDIGGGYYKIRECNYEDECQRGRNCRYGVSNCLTLKKDSE.

Belongs to the UPF0251 family.

The protein is UPF0251 protein MmarC7_1642 of Methanococcus maripaludis (strain C7 / ATCC BAA-1331).